We begin with the raw amino-acid sequence, 432 residues long: Queuine tRNA-ribosyltransferase accessory subunit 2 (432 aa).

4 residues coordinate Zn(2+): Cys-329, Cys-331, Cys-334, and His-360. Positions Gly-390 to Ala-432 are disordered. The segment covering Leu-422–Ala-432 has biased composition (basic and acidic residues).

The protein belongs to the queuine tRNA-ribosyltransferase family. QTRT2 subfamily. As to quaternary structure, heterodimer of a catalytic subunit and an accessory subunit. Requires Zn(2+) as cofactor.

It is found in the cytoplasm. Its function is as follows. Non-catalytic subunit of the queuine tRNA-ribosyltransferase (TGT) that catalyzes the base-exchange of a guanine (G) residue with queuine (Q) at position 34 (anticodon wobble position) in tRNAs with GU(N) anticodons (tRNA-Asp, -Asn, -His and -Tyr), resulting in the hypermodified nucleoside queuosine (7-(((4,5-cis-dihydroxy-2-cyclopenten-1-yl)amino)methyl)-7-deazaguanosine). This chain is Queuine tRNA-ribosyltransferase accessory subunit 2, found in Anopheles gambiae (African malaria mosquito).